We begin with the raw amino-acid sequence, 196 residues long: ECF RNA polymerase sigma factor SigM (196 aa).

The sigma-70 factor domain-2 stretch occupies residues 39-105 (LFRRHHRQLH…ACLDRLRRAK (67 aa)). Positions 63–66 (DALQ) match the Interaction with polymerase core subunit RpoC motif. The tract at residues 130–181 (AVQRALMRLPVEQRAAVVAVDMQGYSIADTARMLGVAEGTVKSRCARARARL) is sigma-70 factor domain-4. The H-T-H motif DNA-binding region spans 156 to 175 (IADTARMLGVAEGTVKSRCA).

It belongs to the sigma-70 factor family. ECF subfamily. In terms of assembly, interacts transiently with the RNA polymerase catalytic core formed by RpoA, RpoB, RpoC and RpoZ (2 alpha, 1 beta, 1 beta' and 1 omega subunit) to form the RNA polymerase holoenzyme that can initiate transcription. Interacts (via sigma-70 factor domain 4) with anti-sigma-M factor RsmA.

Its function is as follows. Sigma factors are initiation factors that promote the attachment of RNA polymerase to specific initiation sites and are then released. Extracytoplasmic function (ECF) sigma factors are held in an inactive form by an anti-sigma factor until released by regulated intramembrane proteolysis. The protein is ECF RNA polymerase sigma factor SigM (sigM) of Mycobacterium tuberculosis (strain ATCC 35801 / TMC 107 / Erdman).